The following is a 716-amino-acid chain: Protein C-mannosyl-transferase DPY19L3 (716 aa).

The Cytoplasmic segment spans residues 1–43 (MMYIRQRKETKPIEVSEDFPSPKEDVKLEKKLPSGCASGRFWK). The helical transmembrane segment at 44–64 (ILSSAVGGTVALCIGLLTSVY) threads the bilayer. Topologically, residues 65–154 (LATLHENDLW…RVLPIQKYLE (90 aa)) are lumenal. An N-linked (GlcNAc...) asparagine glycan is attached at Asn118. Residues 155 to 182 (PVYFYIYTLFGLQAVYVTALYITSWLLS) traverse the membrane as a helical segment. Residues 183–184 (GT) lie on the Cytoplasmic side of the membrane. The name=3 intramembrane region spans 185-197 (WLSGLLAALWYVT). Residues 198 to 215 (NRIDTTRVEFTIPLRENW) are Cytoplasmic-facing. The segment at residues 216 to 230 (ALPFFAIQIAAITYF) is an intramembrane region (name=4). Over 231 to 239 (LRPNLQPLS) the chain is Cytoplasmic. The helical transmembrane segment at 240–256 (ERLTLLAIFVSTFLFSL) threads the bilayer. The Lumenal portion of the chain corresponds to 257–262 (TWQFNQ). Residues 263–279 (FMMLLQALVLFILDSLD) traverse the membrane as a helical segment. The Cytoplasmic segment spans residues 280–289 (MLPAMKATWL). A helical membrane pass occupies residues 290–306 (YGIQISCLLLVCTLQFF). Topologically, residues 307–308 (NS) are lumenal. The helical transmembrane segment at 309 to 323 (MILGSLLISFNLSVL) threads the bilayer. Residues 324-338 (IVRKLQKNLKTGSFL) lie on the Cytoplasmic side of the membrane. Residues 339 to 359 (TRIWKLLLHLLLVFCLTLFLN) traverse the membrane as a helical segment. Residues 360–414 (NIIKKVLNLKSDEHIFKFLKAKFGFGATRDFDANLYLCEEAFGLLPLNTFQRLSE) lie on the Lumenal side of the membrane. A helical membrane pass occupies residues 415–437 (TLLFYAYMFVLVVTVVTASVVAF). The Cytoplasmic segment spans residues 438–465 (HNLSDSTSLKSMDQTRKRAVDLKPEAAY). The helical transmembrane segment at 466 to 485 (NLIHTILFGVLALSTMRMKY) threads the bilayer. At 486–487 (LW) the chain is on the lumenal side. A helical transmembrane segment spans residues 488 to 499 (TSHMCVFASFGL). At 500-522 (CSSEVWELLLRLVHLCNPKRIWV) the chain is on the cytoplasmic side. Residues 523-539 (LRYLVPVLTLLYLCYKS) form a helical membrane-spanning segment. Topologically, residues 540-716 (WPGVMDELSE…FHVYKLSRNK (177 aa)) are lumenal. Asn704 carries N-linked (GlcNAc...) asparagine glycosylation.

Belongs to the dpy-19 family.

Its subcellular location is the endoplasmic reticulum membrane. It carries out the reaction L-tryptophyl-[protein] + a di-trans,poly-cis-dolichyl beta-D-mannosyl phosphate = C-alpha-D-mannosyl-L-tryptophyl-[protein] + a di-trans,poly-cis-dolichyl phosphate + H(+). Its pathway is protein modification; protein glycosylation. Its function is as follows. C-mannosyltransferase that mediates C-mannosylation of tryptophan residues on target proteins. The reaction occurs on the luminal side of the endoplasmic reticulum and involves the transfer of a mannose unit from a dolichylphosphate mannose (Dol-P-Man) donor to an acceptor protein containing a WxxW or WxxC consensus sequence. C-mannosylates RSPO1, a Wnt signaling regulator, preferentially at the first Trp residue in the sequence WxxW. C-mannosylates the netrin receptor UNC5A, preferentially at the third tryptophan of WxxWxxWxxC sequence. The polypeptide is Protein C-mannosyl-transferase DPY19L3 (Dpy19l3) (Mus musculus (Mouse)).